Here is a 139-residue protein sequence, read N- to C-terminus: Orientotoxin-2 (139 aa).

In terms of tissue distribution, expressed by the venom gland.

Its subcellular location is the secreted. The catalysed reaction is a 1,2-diacyl-sn-glycero-3-phosphocholine + H2O = a 1-acyl-sn-glycero-3-phosphocholine + a fatty acid + H(+). Has a highly toxic phospholipase A2 activity. The chain is Orientotoxin-2 from Vespa orientalis (Oriental hornet).